A 394-amino-acid chain; its full sequence is Flavin-dependent monooxygenase, oxygenase subunit HsaA (394 aa).

FMN is bound by residues Trp84, 118–120, 141–143, Arg263, 346–347, and 368–369; these read SSY, WSS, AT, and HA.

This sequence belongs to the HpaH/HsaA monooxygenase family. As to quaternary structure, homotetramer under anaerobic conditions. HsaAB monooxygenase consists of an oxygenase component HsaA and a reductase component HsaB.

The catalysed reaction is 3-hydroxy-9,10-secoandrosta-1,3,5(10)-triene-9,17-dione + FMNH2 + O2 = 3,4-dihydroxy-9,10-secoandrosta-1,3,5(10)-triene-9,17-dione + FMN + H2O + H(+). Its pathway is lipid metabolism; steroid biosynthesis. Functionally, catalyzes the o-hydroxylation of 3-hydroxy-9,10-secoandrosta-1,3,5(10)-triene-9,17-dione (3-HSA) to 3,4-dihydroxy-9,10-secoandrosta-1,3,5(10)-triene-9,17-dione (3,4-DHSA) in the catabolism of cholesterol. The chain is Flavin-dependent monooxygenase, oxygenase subunit HsaA from Mycobacterium tuberculosis (strain CDC 1551 / Oshkosh).